The sequence spans 420 residues: Serine/threonine transporter SstT (420 aa).

The next 9 helical transmembrane spans lie at 14-34, 40-60, 71-91, 172-192, 210-230, 283-303, 309-329, 332-352, and 356-376; these read IMIGIVIGTTLGFLVPEWTFI, LFVGALKAIAPILVFVLIIAS, YVGSILVVYLLATFLAAVVAV, ITTVVQMIIGIAPIGILGLVF, LLLLIGTMAVVALVVYPAIVF, IPLGATINMGGAAITITIMTL, LGMSVPIYLALLLSIIAAVSA, ASGIAGGSLLLIPLACSLFGI, and IAMQVVGVGFIVGVVQDSIET.

Belongs to the dicarboxylate/amino acid:cation symporter (DAACS) (TC 2.A.23) family.

It localises to the cell membrane. The enzyme catalyses L-serine(in) + Na(+)(in) = L-serine(out) + Na(+)(out). The catalysed reaction is L-threonine(in) + Na(+)(in) = L-threonine(out) + Na(+)(out). In terms of biological role, involved in the import of serine and threonine into the cell, with the concomitant import of sodium (symport system). This chain is Serine/threonine transporter SstT, found in Enterococcus faecalis (strain ATCC 700802 / V583).